We begin with the raw amino-acid sequence, 483 residues long: Glutamyl-tRNA(Gln) amidotransferase subunit A (483 aa).

Active-site charge relay system residues include Lys-75 and Ser-150. The active-site Acyl-ester intermediate is the Ser-174.

This sequence belongs to the amidase family. GatA subfamily. As to quaternary structure, heterotrimer of A, B and C subunits.

It carries out the reaction L-glutamyl-tRNA(Gln) + L-glutamine + ATP + H2O = L-glutaminyl-tRNA(Gln) + L-glutamate + ADP + phosphate + H(+). Allows the formation of correctly charged Gln-tRNA(Gln) through the transamidation of misacylated Glu-tRNA(Gln) in organisms which lack glutaminyl-tRNA synthetase. The reaction takes place in the presence of glutamine and ATP through an activated gamma-phospho-Glu-tRNA(Gln). The polypeptide is Glutamyl-tRNA(Gln) amidotransferase subunit A (Legionella pneumophila (strain Paris)).